Consider the following 250-residue polypeptide: DNA repair protein RecO (250 aa).

The protein belongs to the RecO family.

In terms of biological role, involved in DNA repair and RecF pathway recombination. The protein is DNA repair protein RecO of Rhodospirillum centenum (strain ATCC 51521 / SW).